Here is a 189-residue protein sequence, read N- to C-terminus: GTP cyclohydrolase 1 (189 aa).

Positions 78, 81, and 150 each coordinate Zn(2+).

This sequence belongs to the GTP cyclohydrolase I family. In terms of assembly, homomer.

It carries out the reaction GTP + H2O = 7,8-dihydroneopterin 3'-triphosphate + formate + H(+). It functions in the pathway cofactor biosynthesis; 7,8-dihydroneopterin triphosphate biosynthesis; 7,8-dihydroneopterin triphosphate from GTP: step 1/1. The protein is GTP cyclohydrolase 1 of Bacillus anthracis (strain A0248).